An 87-amino-acid polypeptide reads, in one-letter code: Mitochondrial import inner membrane translocase subunit TIM8 (87 aa).

The Twin CX3C motif signature appears at 44–68 (CFKNCISNVQNADLSSQEEQCLNNC). 2 disulfide bridges follow: Cys44–Cys68 and Cys48–Cys64.

This sequence belongs to the small Tim family. In terms of assembly, heterohexamer; composed of 3 copies of TIM8 and 3 copies of TIM13, named soluble 70 kDa complex. Associates with the TIM22 complex, whose core is composed of TIM22 and TIM54. Interacts with the transmembrane regions of multi-pass transmembrane proteins in transit.

The protein resides in the mitochondrion inner membrane. Its function is as follows. Mitochondrial intermembrane chaperone that participates in the import and insertion of some multi-pass transmembrane proteins into the mitochondrial inner membrane. Also required for the transfer of beta-barrel precursors from the TOM complex to the sorting and assembly machinery (SAM complex) of the outer membrane. Acts as a chaperone-like protein that protects the hydrophobic precursors from aggregation and guide them through the mitochondrial intermembrane space. The TIM8-TIM13 complex is non essential and only mediates the import of few proteins, while the predominant TIM9-TIM10 70 kDa complex is crucial and mediates the import of much more proteins. In Kluyveromyces lactis (strain ATCC 8585 / CBS 2359 / DSM 70799 / NBRC 1267 / NRRL Y-1140 / WM37) (Yeast), this protein is Mitochondrial import inner membrane translocase subunit TIM8 (TIM8).